The primary structure comprises 182 residues: tRNA-splicing endonuclease (182 aa).

Catalysis depends on residues tyrosine 119, histidine 127, and lysine 158.

This sequence belongs to the tRNA-intron endonuclease family. Archaeal short subfamily. In terms of assembly, homotetramer; although the tetramer contains four active sites, only two participate in the cleavage. Therefore, it should be considered as a dimer of dimers.

It carries out the reaction pretRNA = a 3'-half-tRNA molecule with a 5'-OH end + a 5'-half-tRNA molecule with a 2',3'-cyclic phosphate end + an intron with a 2',3'-cyclic phosphate and a 5'-hydroxyl terminus.. In terms of biological role, endonuclease that removes tRNA introns. Cleaves pre-tRNA at the 5'- and 3'-splice sites to release the intron. The products are an intron and two tRNA half-molecules bearing 2',3' cyclic phosphate and 5'-OH termini. Recognizes a pseudosymmetric substrate in which 2 bulged loops of 3 bases are separated by a stem of 4 bp. The polypeptide is tRNA-splicing endonuclease (Saccharolobus islandicus (strain M.16.27) (Sulfolobus islandicus)).